Consider the following 638-residue polypeptide: Probable potassium transport system protein Kup (638 aa).

The tract at residues 1–20 (MQVEHEVATEGGQAPASSGH) is disordered. The next 12 helical transmembrane spans lie at 24 to 44 (IAGLAVAAIGVVYGDIGTSPL), 67 to 87 (ILSLVFWALVTVVSAKYVVFI), 115 to 135 (AWWLSVLGVFGAALFYGDGMI), 153 to 173 (PAFKPFVIPIALVVLVGLFVM), 181 to 201 (VGAIFGPVMVCWFLVLAVLGI), 228 to 248 (LIGWLALGAVVLAITGGEALY), 263 to 283 (WFSLVFPALYLNYLGQGALIL), 301 to 321 (LVYPMVGMATLATIIASQAVI), 353 to 373 (IYVPGVNWMLLGAVVALVVGF), 382 to 402 (AYGIAVTLTMMIDTVLAFVVV), 413 to 433 (AVLFLVVFLAVDIAFFSATTV), and 435 to 455 (IFAGGWFPLLIGAAIFTLLRT).

It belongs to the HAK/KUP transporter (TC 2.A.72) family.

The protein localises to the cell inner membrane. It catalyses the reaction K(+)(in) + H(+)(in) = K(+)(out) + H(+)(out). In terms of biological role, transport of potassium into the cell. Likely operates as a K(+):H(+) symporter. The polypeptide is Probable potassium transport system protein Kup (Azoarcus sp. (strain BH72)).